The chain runs to 811 residues: Mitochondrial intermediate peptidase (811 aa).

Residues 1–25 (MRSGSRLSNYLVRLSGRVSFTQKRS) constitute a mitochondrion transit peptide. Residues 423 to 450 (TENGEKASTDTSTSTTTSTTTTDSTTTT) are disordered. Low complexity predominate over residues 431–450 (TDTSTSTTTSTTTTDSTTTT). Zn(2+) is bound at residue H593. Residue E594 is part of the active site. The Zn(2+) site is built by H597 and H600.

The protein belongs to the peptidase M3 family. Zn(2+) serves as cofactor.

Its subcellular location is the mitochondrion matrix. The catalysed reaction is Release of an N-terminal octapeptide as second stage of processing of some proteins imported into the mitochondrion.. Functionally, cleaves proteins, imported into the mitochondrion, to their mature size. While most mitochondrial precursor proteins are processed to the mature form in one step by mitochondrial processing peptidase (MPP), the sequential cleavage by MIP of an octapeptide after initial processing by MPP is a required step for a subgroup of nuclear-encoded precursor proteins destined for the matrix or the inner membrane. The protein is Mitochondrial intermediate peptidase (OCT1) of Lodderomyces elongisporus (strain ATCC 11503 / CBS 2605 / JCM 1781 / NBRC 1676 / NRRL YB-4239) (Yeast).